The primary structure comprises 272 residues: HMP-PP phosphatase (272 aa).

Aspartate 8 (nucleophile) is an active-site residue. 3 residues coordinate Mg(2+): aspartate 8, aspartate 10, and aspartate 212.

It belongs to the HAD-like hydrolase superfamily. Cof family. Requires Mg(2+) as cofactor.

It catalyses the reaction 4-amino-2-methyl-5-(diphosphooxymethyl)pyrimidine + H2O = 4-amino-2-methyl-5-(phosphooxymethyl)pyrimidine + phosphate + H(+). In terms of biological role, catalyzes the hydrolysis of 4-amino-2-methyl-5-hydroxymethylpyrimidine pyrophosphate (HMP-PP) to 4-amino-2-methyl-5-hydroxymethylpyrimidine phosphate (HMP-P). The chain is HMP-PP phosphatase from Salmonella choleraesuis (strain SC-B67).